The chain runs to 500 residues: L-arabinose isomerase (500 aa).

4 residues coordinate Mn(2+): Glu306, Glu333, His350, and His450.

Belongs to the arabinose isomerase family. Homohexamer. Mn(2+) serves as cofactor.

It catalyses the reaction beta-L-arabinopyranose = L-ribulose. The protein operates within carbohydrate degradation; L-arabinose degradation via L-ribulose; D-xylulose 5-phosphate from L-arabinose (bacterial route): step 1/3. Functionally, catalyzes the conversion of L-arabinose to L-ribulose. The chain is L-arabinose isomerase from Yersinia enterocolitica serotype O:8 / biotype 1B (strain NCTC 13174 / 8081).